We begin with the raw amino-acid sequence, 205 residues long: Urease accessory protein UreE (205 aa).

Residues 171-192 are compositionally biased toward basic and acidic residues; it reads HHGHSHSHDHDHDHDHDHDHQH. Positions 171–205 are disordered; sequence HHGHSHSHDHDHDHDHDHDHQHGPCCSHGHHHGHR.

It belongs to the UreE family.

It is found in the cytoplasm. Functionally, involved in urease metallocenter assembly. Binds nickel. Probably functions as a nickel donor during metallocenter assembly. The sequence is that of Urease accessory protein UreE from Burkholderia pseudomallei (strain K96243).